Here is a 2034-residue protein sequence, read N- to C-terminus: Host cell factor 1 (2034 aa).

Position 2 is an N-acetylalanine (alanine 2). A Phosphoserine modification is found at serine 6. 5 Kelch repeats span residues 44 to 89 (LIVV…GFVC), 93 to 140 (RLLV…RLGH), 148 to 194 (KCYL…ITYG), 217 to 265 (KLVI…TIGN), and 266 to 313 (KMYV…LMDT). Residues lysine 105, lysine 163, and lysine 244 each participate in a glycyl lysine isopeptide (Lys-Gly) (interchain with G-Cter in ubiquitin) cross-link. A Glycyl lysine isopeptide (Lys-Gly) (interchain with G-Cter in SUMO2) cross-link involves residue lysine 282. Position 288 is an N6-acetyllysine (lysine 288). Lysine 363 is covalently cross-linked (Glycyl lysine isopeptide (Lys-Gly) (interchain with G-Cter in ubiquitin)). The Fibronectin type-III 1 domain occupies 366–469 (PPARVQLVRA…TIQVLPTVPG (104 aa)). The disordered stretch occupies residues 407–434 (ATATSPTPNPVPSVPANPPKSPAPAAAA). Serine 411 bears the Phosphoserine mark. Over residues 413–428 (TPNPVPSVPANPPKSP) the composition is skewed to pro residues. Positions 500-550 (LVTMRPASQAGKAPVTVTSLPASVRMVVPTQSAQGTVIGSNPQMSGMAALA) are required for interaction with OGT. Residues arginine 504 and arginine 524 each carry the omega-N-methylarginine modification. Serine 598, serine 666, and serine 669 each carry phosphoserine. Positions 610-722 (LKTAAAQVGT…KGPLPAGTIL (113 aa)) are interaction with SIN3A. The interaction with ZBTB17 stretch occupies residues 750 to 902 (ILGISSVSPS…SLAGAGAHST (153 aa)). Residue lysine 813 is modified to N6-acetyllysine. The tract at residues 813–912 (KIITAVPKIA…SASLATPITT (100 aa)) is interaction with GABP2. HCF repeat repeat units follow at residues 1010–1035 (TLVC…TVVA), 1072–1097 (VRVC…ATSN), and 1101–1126 (QHGC…AMSS). One copy of the HCF repeat 4; degenerate repeat lies at 1156–1182 (RAQGTVKPPCQTQQTNMTSTTMTVQAT). Phosphoserine is present on residues serine 1204 and serine 1223. Disordered stretches follow at residues 1221 to 1241 (GPSS…TYTT), 1302 to 1374 (PCET…TTST), 1444 to 1477 (TVTS…NITS), and 1491 to 1525 (RAVT…QLPP). 2 HCF repeat repeats span residues 1295-1320 (TQVC…SNAG) and 1323-1348 (QRVC…ATSN). Over residues 1308–1321 (TGTTNTATTSNAGS) the composition is skewed to low complexity. An HCF repeat 7; degenerate repeat occupies 1358 to 1383 (QQPASGHPCETHQTTSTGTTMSVSVG). The HCF repeat 8 repeat unit spans residues 1423 to 1448 (QRVCSNPPCETHETGTTHTATTVTSN). Residues 1491-1501 (RAVTTVTQSTP) show a composition bias toward low complexity. Position 1500 is a phosphothreonine (threonine 1500). Over residues 1502–1511 (VPGPSVPPPE) the composition is skewed to pro residues. Phosphoserine is present on residues serine 1506 and serine 1516. A coiled-coil region spans residues 1693–1723 (IVLTQQELAALVQQQQQLQEAQAQAQQQHHL). A Phosphoserine modification is found at serine 1782. Fibronectin type-III domains lie at 1808-1899 (LPPP…TCLP) and 1901-2017 (FPGA…TSKD). Glycyl lysine isopeptide (Lys-Gly) (interchain with G-Cter in ubiquitin) cross-links involve residues lysine 1818 and lysine 1819. Phosphoserine is present on serine 1849. The disordered stretch occupies residues 2005–2034 (ATQVRWLQETSKDSSGTKPASKRPMSSPEM). Lysine 2016 is subject to N6-acetyllysine.

In terms of assembly, composed predominantly of six polypeptides ranging from 110 to 150 kDa and a minor 300 kDa polypeptide. The majority of N- and C-terminal cleavage products remain tightly, albeit non-covalently, associated. Interacts with POU2F1, CREB3, ZBTB17, EGR2, E2F4, CREBZF, SP1, GABP2, Sin3 HDAC complex (SIN3A, HDAC1, HDAC2, SUDS3), SAP30, SIN3B and FHL2. Component of a MLL1 complex, composed of at least the core components KMT2A/MLL1, ASH2L, HCFC1, WDR5 and RBBP5, as well as the facultative components BACC1, CHD8, DPY30, E2F6, HCFC2, HSP70, INO80C, KANSL1, LAS1L, MAX, MCRS1, MEN1, MGA, KAT8, PELP1, PHF20, PRP31, RING2, RUVBL1, RUVBL2, SENP3, TAF1, TAF4, TAF6, TAF7, TAF9 and TEX10. Component of a THAP1/THAP3-HCFC1-OGT complex that is required for the regulation of the transcriptional activity of RRM1. Interacts directly with THAP3 (via its HBM). Interacts (via the Kelch-repeat domain) with THAP1 (via the HBM); the interaction recruits HCHC1 to the RRM1. Interacts with THAP7 and THAP11 (via the HMB). Interacts directly with OGT; the interaction, which requires the HCFC1 cleavage site domain, glycosylates and promotes the proteolytic processing of HCFC1, retains OGT in the nucleus and impacts the expression of herpes simplex virus immediate early viral genes. Component of the SET1 complex, at least composed of the catalytic subunit (SETD1A or SETD1B), WDR5, WDR82, RBBP5, ASH2L, CXXC1, HCFC1 and DPY30. Component of the NSL complex at least composed of MOF/KAT8, KANSL1, KANSL2, KANSL3, MCRS1, PHF20, OGT1/OGT, WDR5 and HCFC1. Component of a complex at least composed of ZNF335, HCFC1, CCAR2, EMSY, MKI67, RBBP5, ASH2L and WDR5; the complex is formed as a result of interactions between components of a nuclear receptor-mediated transcription complex and a histone methylation complex. Within the complex interacts with ZNF335. Interacts with TET2 and TET3. Interacts with HCFC1R1. Interacts with THAP11. Interacts (via Kelch domain) with KMT2E/MLL5 isoform 3 (via HBM motif). Interacts with E2F1. Accessory scaffold component of the polycomb repressive deubiquitinase (PR-DUB) complex, at least composed of BAP1, one of ASXL1, ASXL2 or (probably) ASXL3 and one of MBD5 or MBD6; the PR-DUB core associates with a number of accessory proteins, including FOXK1, FOXK2, KDM1B, HCFC1, YY1 and OGT. Interacts with YY1 (via Gly-rich region); the interaction is direct. Interacts with BAP1 (via HBM-like motif). In terms of processing, proteolytically cleaved at one or several PPCE--THET sites within the HCF repeats. Further cleavage of the primary N- and C-terminal chains results in a 'trimming' and accumulation of the smaller chains. Cleavage is promoted by O-glycosylation. Post-translationally, O-glycosylated. GlcNAcylation by OGT promotes proteolytic processing. Ubiquitinated. Lys-1818 and Lys-1819 are ubiquitinated both via 'Lys-48'- and 'Lys-63'-linked polyubiquitin chains. BAP1 mediated deubiquitination of 'Lys-48'-linked polyubiquitin chains; deubiquitination by BAP1 does not seem to stabilize the protein.

The protein localises to the cytoplasm. The protein resides in the nucleus. In terms of biological role, transcriptional coregulator. Serves as a scaffold protein, bridging interactions between transcription factors, including THAP11 and ZNF143, and transcriptional coregulators. Involved in control of the cell cycle. Also antagonizes transactivation by ZBTB17 and GABP2; represses ZBTB17 activation of the p15(INK4b) promoter and inhibits its ability to recruit p300. Coactivator for EGR2 and GABP2. Tethers the chromatin modifying Set1/Ash2 histone H3 'Lys-4' methyltransferase (H3K4me) and Sin3 histone deacetylase (HDAC) complexes (involved in the activation and repression of transcription, respectively) together. Component of a THAP1/THAP3-HCFC1-OGT complex that is required for the regulation of the transcriptional activity of RRM1. As part of the NSL complex it may be involved in acetylation of nucleosomal histone H4 on several lysine residues. Recruits KMT2E/MLL5 to E2F1 responsive promoters promoting transcriptional activation and thereby facilitates G1 to S phase transition. Modulates expression of homeobox protein PDX1, perhaps acting in concert with transcription factor E2F1, thereby regulating pancreatic beta-cell growth and glucose-stimulated insulin secretion. May negatively modulate transcriptional activity of FOXO3. This Rattus norvegicus (Rat) protein is Host cell factor 1.